Here is a 36-residue protein sequence, read N- to C-terminus: DNA binding protein ORF8 (36 aa).

This sequence belongs to the microviridae J protein family.

The protein resides in the virion. It is found in the host cytoplasm. Mediates ssDNA packaging into virion, it locates to the internal surface of the capsid. Additionally, plays a role in viral attachment to the host cell. The sequence is that of DNA binding protein ORF8 from Chlamydia phage 1 (Bacteriophage Chp1).